The chain runs to 126 residues: Large ribosomal subunit protein bL12 (126 aa).

It belongs to the bacterial ribosomal protein bL12 family. In terms of assembly, homodimer. Part of the ribosomal stalk of the 50S ribosomal subunit. Forms a multimeric L10(L12)X complex, where L10 forms an elongated spine to which 2 to 4 L12 dimers bind in a sequential fashion. Binds GTP-bound translation factors.

Functionally, forms part of the ribosomal stalk which helps the ribosome interact with GTP-bound translation factors. Is thus essential for accurate translation. The chain is Large ribosomal subunit protein bL12 from Acidobacterium capsulatum (strain ATCC 51196 / DSM 11244 / BCRC 80197 / JCM 7670 / NBRC 15755 / NCIMB 13165 / 161).